A 227-amino-acid polypeptide reads, in one-letter code: Cytochrome c oxidase subunit 2 (227 aa).

Over 1–22 (MAYPFQLGLQDATSPIMEELMN) the chain is Mitochondrial intermembrane. The helical transmembrane segment at 23–44 (FHDHTLMIVFLISSLVLYIISL) threads the bilayer. The Mitochondrial matrix segment spans residues 45-60 (MLTTKLTHTSTMDAQE). The chain crosses the membrane as a helical span at residues 61–81 (VETIWTILPAVILIMIALPSL). The Mitochondrial intermembrane portion of the chain corresponds to 82-227 (RILYMMDEIN…YFENWSASMI (146 aa)). Residues His-161, Cys-196, Glu-198, Cys-200, His-204, and Met-207 each coordinate Cu cation. Glu-198 contacts Mg(2+). At Tyr-218 the chain carries Phosphotyrosine.

Belongs to the cytochrome c oxidase subunit 2 family. Component of the cytochrome c oxidase (complex IV, CIV), a multisubunit enzyme composed of 14 subunits. The complex is composed of a catalytic core of 3 subunits MT-CO1, MT-CO2 and MT-CO3, encoded in the mitochondrial DNA, and 11 supernumerary subunits COX4I, COX5A, COX5B, COX6A, COX6B, COX6C, COX7A, COX7B, COX7C, COX8 and NDUFA4, which are encoded in the nuclear genome. The complex exists as a monomer or a dimer and forms supercomplexes (SCs) in the inner mitochondrial membrane with NADH-ubiquinone oxidoreductase (complex I, CI) and ubiquinol-cytochrome c oxidoreductase (cytochrome b-c1 complex, complex III, CIII), resulting in different assemblies (supercomplex SCI(1)III(2)IV(1) and megacomplex MCI(2)III(2)IV(2)). Found in a complex with TMEM177, COA6, COX18, COX20, SCO1 and SCO2. Interacts with TMEM177 in a COX20-dependent manner. Interacts with COX20. Interacts with COX16. Requires Cu cation as cofactor.

The protein localises to the mitochondrion inner membrane. It carries out the reaction 4 Fe(II)-[cytochrome c] + O2 + 8 H(+)(in) = 4 Fe(III)-[cytochrome c] + 2 H2O + 4 H(+)(out). Its function is as follows. Component of the cytochrome c oxidase, the last enzyme in the mitochondrial electron transport chain which drives oxidative phosphorylation. The respiratory chain contains 3 multisubunit complexes succinate dehydrogenase (complex II, CII), ubiquinol-cytochrome c oxidoreductase (cytochrome b-c1 complex, complex III, CIII) and cytochrome c oxidase (complex IV, CIV), that cooperate to transfer electrons derived from NADH and succinate to molecular oxygen, creating an electrochemical gradient over the inner membrane that drives transmembrane transport and the ATP synthase. Cytochrome c oxidase is the component of the respiratory chain that catalyzes the reduction of oxygen to water. Electrons originating from reduced cytochrome c in the intermembrane space (IMS) are transferred via the dinuclear copper A center (CU(A)) of subunit 2 and heme A of subunit 1 to the active site in subunit 1, a binuclear center (BNC) formed by heme A3 and copper B (CU(B)). The BNC reduces molecular oxygen to 2 water molecules using 4 electrons from cytochrome c in the IMS and 4 protons from the mitochondrial matrix. In Mus musculus (Mouse), this protein is Cytochrome c oxidase subunit 2 (Mtco2).